A 325-amino-acid chain; its full sequence is Protein ORANGE-ORANGE, chloroplastic (325 aa).

Residues 1 to 54 (MDRVLVASYPINHLIRPHSFRIDYCWSTCFTSRLNSGKERQKLSSRWRWRSMAS) constitute a chloroplast transit peptide. Residues 53 to 71 (ASDSTDSSSSSSFAPSVES) show a composition bias toward low complexity. The interval 53–77 (ASDSTDSSSSSSFAPSVESDPSDKT) is disordered. The next 2 membrane-spanning stretches (helical) occupy residues 164 to 184 (LYYV…GLLA) and 217 to 237 (IVAS…VVEV). A CR-type-like region spans residues 226 to 317 (VGVISALMVV…CTGMAMASEH (92 aa)). A CXXCXGXG motif repeat occupies 248–255 (CKYCLGTG). The stretch at 259 to 266 (CARCSNTG) is one CXXCXXXG motif repeat. One copy of the CXXCXGXG motif repeat lies at 292–299 (CQNCSGSG). The stretch at 303–310 (CPTCLCTG) is one CXXCXXXG motif repeat.

This sequence belongs to the orange-like family.

It localises to the plastid. Its subcellular location is the chloroplast membrane. Functionally, triggers accumulation of carotenoids, mainly beta-carotene, in fruit flesh. The polypeptide is Protein ORANGE-ORANGE, chloroplastic (Cucumis melo (Muskmelon)).